The following is a 115-amino-acid chain: Large ribosomal subunit protein bL19 (115 aa).

This sequence belongs to the bacterial ribosomal protein bL19 family.

This protein is located at the 30S-50S ribosomal subunit interface and may play a role in the structure and function of the aminoacyl-tRNA binding site. The sequence is that of Large ribosomal subunit protein bL19 from Kosmotoga olearia (strain ATCC BAA-1733 / DSM 21960 / TBF 19.5.1).